Here is a 293-residue protein sequence, read N- to C-terminus: Probable adenylate kinase 1, chloroplastic (293 aa).

Residues 1 to 26 (MAAVQRLLRASASGGAAAAAAAARRR) constitute a mitochondrion transit peptide. ATP is bound at residue 70 to 75 (GVGKGT). Positions 90–119 (ATGDLVRDELASSGPLSVQLAEIVNQGKLV) are NMP. AMP contacts are provided by residues threonine 91, arginine 96, 117–119 (KLV), 147–150 (GFPR), and glutamine 154. The segment at 183–231 (GRRICGQCGKNFNLACIDVKGENGLPPIYMAPLLPPNNCMSKLITRADD) is LID. ATP contacts are provided by residues arginine 184 and 193-194 (NF). AMP is bound by residues arginine 228 and arginine 239.

Belongs to the adenylate kinase family.

The protein localises to the mitochondrion. It catalyses the reaction AMP + ATP = 2 ADP. Functionally, catalyzes the reversible transfer of the terminal phosphate group between ATP and AMP. Plays an important role in cellular energy homeostasis and in adenine nucleotide metabolism. This Oryza sativa subsp. japonica (Rice) protein is Probable adenylate kinase 1, chloroplastic.